The primary structure comprises 542 residues: Formate--tetrahydrofolate ligase (542 aa).

Position 53 to 60 (53 to 60 (TPAGEGKT)) interacts with ATP.

This sequence belongs to the formate--tetrahydrofolate ligase family.

The enzyme catalyses (6S)-5,6,7,8-tetrahydrofolate + formate + ATP = (6R)-10-formyltetrahydrofolate + ADP + phosphate. The protein operates within one-carbon metabolism; tetrahydrofolate interconversion. This is Formate--tetrahydrofolate ligase from Thermotoga petrophila (strain ATCC BAA-488 / DSM 13995 / JCM 10881 / RKU-1).